Consider the following 421-residue polypeptide: Acyl-coenzyme A thioesterase 1 (421 aa).

Active-site charge relay system residues include serine 232, aspartate 326, and histidine 360.

This sequence belongs to the C/M/P thioester hydrolase family. In terms of assembly, monomer.

The protein resides in the cytoplasm. The protein localises to the cytosol. The catalysed reaction is hexadecanoyl-CoA + H2O = hexadecanoate + CoA + H(+). The enzyme catalyses decanoyl-CoA + H2O = decanoate + CoA + H(+). It carries out the reaction dodecanoyl-CoA + H2O = dodecanoate + CoA + H(+). It catalyses the reaction tetradecanoyl-CoA + H2O = tetradecanoate + CoA + H(+). The catalysed reaction is octadecanoyl-CoA + H2O = octadecanoate + CoA + H(+). The enzyme catalyses eicosanoyl-CoA + H2O = eicosanoate + CoA + H(+). It carries out the reaction (9Z)-octadecenoyl-CoA + H2O = (9Z)-octadecenoate + CoA + H(+). It catalyses the reaction (9Z)-hexadecenoyl-CoA + H2O = (9Z)-hexadecenoate + CoA + H(+). The catalysed reaction is (9E)-octadecenoyl-CoA + H2O = (9E)-octadecenoate + CoA + H(+). It participates in lipid metabolism; fatty acid metabolism. In terms of biological role, catalyzes the hydrolysis of acyl-CoAs into free fatty acids and coenzyme A (CoASH), regulating their respective intracellular levels. More active towards saturated and unsaturated long chain fatty acyl-CoAs (C12-C20). The sequence is that of Acyl-coenzyme A thioesterase 1 (ACOT1) from Homo sapiens (Human).